The following is a 170-amino-acid chain: Myosin regulatory light chain 2 (170 aa).

Residues 1–13 (MSKAAKKKSSKKR) show a composition bias toward basic residues. The interval 1 to 22 (MSKAAKKKSSKKRSGSEAAQFD) is disordered. EF-hand domains follow at residues 24–59 (KTIQ…MGQI) and 93–128 (DPEA…KRGE). Ca(2+) is bound by residues Asp37, Asn39, Asp41, and Asp48.

In terms of assembly, myosin is a hexamer of 2 heavy chains and 4 light chains (two regulatory light chains and two essential light chains).

The sequence is that of Myosin regulatory light chain 2 (mlc-2) from Caenorhabditis elegans.